Consider the following 734-residue polypeptide: Putative protocadherin beta-18 (734 aa).

Cadherin domains follow at residues 1–79 (MWKT…TPTF), 80–188 (LNNH…APEF), 189–293 (EKPV…PPEI), 294–398 (AMTS…APIF), and 399–508 (TQTS…SPFV). N-linked (GlcNAc...) asparagine glycosylation occurs at asparagine 115. N-linked (GlcNAc...) asparagine glycosylation is found at asparagine 365 and asparagine 383. Asparagine 514 is a glycosylation site (N-linked (GlcNAc...) asparagine). The 107-residue stretch at 515–621 (GSAPCTELVP…GFSQPYLPLT (107 aa)) folds into the Cadherin 6 domain. The chain crosses the membrane as a helical span at residues 638 to 658 (VVALASVSSLFLFSVFLFVAV).

The protein localises to the cell membrane. Potential calcium-dependent cell-adhesion protein. This is Putative protocadherin beta-18 (PCDHB18P) from Homo sapiens (Human).